Consider the following 607-residue polypeptide: ENTH domain-containing protein 1 (607 aa).

The ENTH domain occupies 9-141; that stretch reads NFVKNYSDAE…MDEPLLCKER (133 aa). A coiled-coil region spans residues 543 to 574; it reads EAKNSISVLLREVKRAIARLHEDLSTVIQELN.

In Homo sapiens (Human), this protein is ENTH domain-containing protein 1 (ENTHD1).